We begin with the raw amino-acid sequence, 2431 residues long: Histone-lysine N-methyltransferase trr (2431 aa).

Disordered stretches follow at residues 34-78 (LQKR…STAP), 135-201 (DADK…ENSG), 213-235 (ASGA…AGTP), and 759-789 (QSAN…TPMN). A compositionally biased stretch (polar residues) spans 142–165 (YRISTPRNSQSNPLLHRNTAFTSF). Low complexity-rich tracts occupy residues 171 to 183 (ASSS…STAS), 218 to 235 (SSTS…AGTP), and 767 to 787 (ATST…NATP). The short motif at 801–805 (LKQLL) is the LXXLL motif 1 element. 5 disordered regions span residues 863-895 (PVPT…GGSS), 918-973 (VGGE…QVKQ), 1226-1292 (HPQQ…AGGA), 1404-1433 (TSGG…KGGS), and 1478-1500 (GLVG…AEKM). Low complexity-rich tracts occupy residues 866–895 (TATQ…GGSS), 952–970 (QQQQ…SPHQ), and 1226–1241 (HPQQ…QPQN). The span at 1269–1281 (RKRRKREVQKPRR) shows a compositional bias: basic residues. The span at 1410–1422 (PASMSSAASAGSS) shows a compositional bias: low complexity. Residues 1423–1433 (SAGGGKLKGGS) show a composition bias toward gly residues. Phosphothreonine is present on Thr1486. A phosphoserine mark is found at Ser1488 and Ser1490. The short motif at 1652 to 1656 (LANLL) is the LXXLL motif 2 element. A disordered region spans residues 1790 to 1836 (GGSAVKSSNGDSPGSFCASSTAPAEMVVKQEPEDEDEKTPSVPGNPT). Polar residues predominate over residues 1794–1811 (VKSSNGDSPGSFCASSTA). The segment at 1895-1935 (TRQCVFCNQRGDGQADGPSRLLNFDVDKWVHLNCALWSNGV) adopts a C2HC pre-PHD-type zinc-finger fold. The PHD-type zinc-finger motif lies at 1956 to 2003 (QACSACHQPGATIKCFKSRCNSLYHLPCAIREECVFYKNKSVHCSVHG). The short motif at 2060-2064 (LSNLL) is the LXXLL motif 3 element. An FYR N-terminal domain is found at 2061 to 2121 (SNLLRVGNMT…CRYICSIAEA (61 aa)). In terms of domain architecture, FYR C-terminal spans 2122–2209 (GCKPEFRIQV…ETLTDYRFKY (88 aa)). An SET domain is found at 2291–2407 (NNVYLARSKI…RGEELSYDYK (117 aa)). The region spanning 2415 to 2431 (HKIPCACGAPNCRKWMN) is the Post-SET domain.

Belongs to the class V-like SAM-binding methyltransferase superfamily. Histone-lysine methyltransferase family. TRX/MLL subfamily. Component of the MLL3/4 complex composed at least of the catalytic subunit trr, ash2, Rbbp5, Dpy-30L1, wds, hcf, ptip, Pa1, Utx, Lpt and Ncoa6. Interacts with nuclear receptor EcR in an ecdysone-dependent manner. Interacts with ash2; the interaction stabilizes trr. As to expression, widely expressed.

The protein resides in the nucleus. It localises to the chromosome. The enzyme catalyses L-lysyl(4)-[histone H3] + 3 S-adenosyl-L-methionine = N(6),N(6),N(6)-trimethyl-L-lysyl(4)-[histone H3] + 3 S-adenosyl-L-homocysteine + 3 H(+). Its function is as follows. Histone methyltransferase that acts as a coactivator for the ecdysone receptor during development. Specifically trimethylates 'Lys-4' of histone H3, a specific tag for epigenetic transcriptional activation. Recruited by EcR in an ecdysone-dependent manner causing H3 'Lys-4' trimethylation at ecdysone-inducible promoters, leading to activate expression. Plays a central role in the developing compound eye, during the progression of the morphogenetic furrow and in post-furrow differentiation of the retinal epithelium, notably by activating expression of hh. Also required for wing and abdominal development. The protein is Histone-lysine N-methyltransferase trr (trr) of Drosophila melanogaster (Fruit fly).